Here is a 486-residue protein sequence, read N- to C-terminus: Maintenance of mitochondrial morphology protein 1 (486 aa).

Over 1–20 (MNFQQSAIPPFSFLLSFTQG) the chain is Lumenal. Residues 21-41 (FLLGQLSVVLLIGAFIKFFIF) form a helical membrane-spanning segment. The Cytoplasmic portion of the chain corresponds to 42–486 (GEAPPPPSRG…GSLPDGAVGN (445 aa)). 3 disordered regions span residues 70–96 (TNEA…SSST), 271–320 (TPPL…SPKS), and 387–486 (RTGV…AVGN). A compositionally biased stretch (polar residues) spans 83 to 96 (STSNVLRPVPSSST). The 252-residue stretch at 128–379 (QPESLDWFNV…EPRVQVVGLP (252 aa)) folds into the SMP-LTD domain. A compositionally biased stretch (pro residues) spans 271–282 (TPPLHTPSPSPA). Residues 292–306 (QSQPENNSSNPNQQS) show a composition bias toward low complexity. 2 stretches are compositionally biased toward polar residues: residues 398 to 407 (TGSNAASRSA) and 440 to 450 (DSVSRSSSFNV). A compositionally biased stretch (basic and acidic residues) spans 460–474 (MTREDSRGAISDDFH).

It belongs to the MMM1 family. As to quaternary structure, homodimer. Component of the ER-mitochondria encounter structure (ERMES) or MDM complex, composed of mmm1, mdm10, mdm12 and mdm34. A mmm1 homodimer associates with one molecule of mdm12 on each side in a pairwise head-to-tail manner, and the SMP-LTD domains of mmm1 and mdm12 generate a continuous hydrophobic tunnel for phospholipid trafficking.

The protein localises to the endoplasmic reticulum membrane. Component of the ERMES/MDM complex, which serves as a molecular tether to connect the endoplasmic reticulum (ER) and mitochondria. Components of this complex are involved in the control of mitochondrial shape and protein biogenesis, and function in nonvesicular lipid trafficking between the ER and mitochondria. The mdm12-mmm1 subcomplex functions in the major beta-barrel assembly pathway that is responsible for biogenesis of all outer membrane beta-barrel proteins, and acts in a late step after the SAM complex. The mdm10-mdm12-mmm1 subcomplex further acts in the TOM40-specific pathway after the action of the mdm12-mmm1 complex. Essential for establishing and maintaining the structure of mitochondria and maintenance of mtDNA nucleoids. This is Maintenance of mitochondrial morphology protein 1 from Aspergillus terreus (strain NIH 2624 / FGSC A1156).